The following is a 309-amino-acid chain: Mas-related G-protein coupled receptor member E (309 aa).

Topologically, residues 1-21 (MSLRVHTHSPSTQGDMAFNLT) are extracellular. Asparagine 19 is a glycosylation site (N-linked (GlcNAc...) asparagine). Residues 22–42 (ILSLTELLSLGGLLGNGVALW) traverse the membrane as a helical segment. At 43 to 59 (LLNQNVYRNPFSIYLLD) the chain is on the cytoplasmic side. The chain crosses the membrane as a helical span at residues 60–80 (VACADLIFLCCHMVAIIPELL). Topologically, residues 81-91 (QDQLNFPEFVH) are extracellular. A helical transmembrane segment spans residues 92–112 (ISLIMLRFFCYIVGLSLLVAI). Residues 113-132 (STEQCLATLFPSGYLCRRPR) are Cytoplasmic-facing. A helical membrane pass occupies residues 133-153 (YLTTCVCAFIWVLCLLLDLLL). Topologically, residues 154–168 (SGACTQFFGAPSYHL) are extracellular. Residues 169 to 189 (CGMLWLVVAVLLAALCCTMCV) traverse the membrane as a helical segment. Residues 190–212 (TSLLLLLRVERGPERHQPRGFPT) lie on the Cytoplasmic side of the membrane. The helical transmembrane segment at 213 to 233 (LVLLVILLFLFCGLPFGIFWL) threads the bilayer. Residues 234-247 (SKNLSWHTPLYFYH) are Extracellular-facing. Asparagine 236 carries N-linked (GlcNAc...) asparagine glycosylation. Residues 248-268 (FSFFMASVHSAAKPAIYFFLG) form a helical membrane-spanning segment. At 269–309 (STPGQRFQEPLRLVLQRALGDEAELGAVREASQGGLVDMTV) the chain is on the cytoplasmic side.

Belongs to the G-protein coupled receptor 1 family. Mas subfamily.

The protein localises to the cell membrane. Functionally, orphan receptor. May regulate nociceptor function and/or development, including the sensation or modulation of pain. The protein is Mas-related G-protein coupled receptor member E (Mrgpre) of Rattus norvegicus (Rat).